Consider the following 420-residue polypeptide: Putative phosphate permease HI_1604 (420 aa).

A run of 12 helical transmembrane segments spans residues 8–28, 49–69, 88–108, 112–132, 145–165, 185–205, 216–236, 250–270, 300–320, 343–363, 370–390, and 393–413; these read GSWL…GIGA, AIII…GEVT, ILAL…FIAT, WPVS…CITI, IVGS…AIFA, GPYY…KKGL, ETLI…HFYF, FGAV…AMAF, GGAL…VGLI, FAAQ…GLPI, VGAI…LTVI, and IISS…IIFY.

The protein belongs to the inorganic phosphate transporter (PiT) (TC 2.A.20) family.

It localises to the cell inner membrane. Potential transporter for phosphate. The sequence is that of Putative phosphate permease HI_1604 from Haemophilus influenzae (strain ATCC 51907 / DSM 11121 / KW20 / Rd).